A 197-amino-acid polypeptide reads, in one-letter code: Large ribosomal subunit protein bL25 (197 aa).

The protein belongs to the bacterial ribosomal protein bL25 family. CTC subfamily. As to quaternary structure, part of the 50S ribosomal subunit; part of the 5S rRNA/L5/L18/L25 subcomplex. Contacts the 5S rRNA. Binds to the 5S rRNA independently of L5 and L18.

Its function is as follows. This is one of the proteins that binds to the 5S RNA in the ribosome where it forms part of the central protuberance. The polypeptide is Large ribosomal subunit protein bL25 (Pseudomonas putida (strain ATCC 700007 / DSM 6899 / JCM 31910 / BCRC 17059 / LMG 24140 / F1)).